The primary structure comprises 750 residues: Photosystem I P700 chlorophyll a apoprotein A1 (750 aa).

Helical transmembrane passes span 70 to 93, 156 to 179, 195 to 219, 291 to 309, 346 to 369, 385 to 411, 433 to 455, and 531 to 549; these read VFSA…FHGA, LYCT…FHYH, LNHH…HVSL, IAHH…GHMY, WHAQ…HHMY, LSLF…IFMV, AIIS…LYIH, and FLVH…LILL. 2 residues coordinate [4Fe-4S] cluster: C573 and C582. The next 2 helical transmembrane spans lie at 589-610 and 664-686; these read HVFL…HFSW and LSAY…MFLF. Position 675 (H675) interacts with chlorophyll a'. The chlorophyll a site is built by M683 and Y691. W692 contacts phylloquinone. The helical transmembrane segment at 724–744 threads the bilayer; the sequence is AVGVTHYLLGGIATTWAFFLA.

It belongs to the PsaA/PsaB family. The PsaA/B heterodimer binds the P700 chlorophyll special pair and subsequent electron acceptors. PSI consists of a core antenna complex that captures photons, and an electron transfer chain that converts photonic excitation into a charge separation. The eukaryotic PSI reaction center is composed of at least 11 subunits. P700 is a chlorophyll a/chlorophyll a' dimer, A0 is one or more chlorophyll a, A1 is one or both phylloquinones and FX is a shared 4Fe-4S iron-sulfur center. serves as cofactor.

Its subcellular location is the plastid. It localises to the chloroplast thylakoid membrane. The catalysed reaction is reduced [plastocyanin] + hnu + oxidized [2Fe-2S]-[ferredoxin] = oxidized [plastocyanin] + reduced [2Fe-2S]-[ferredoxin]. Its function is as follows. PsaA and PsaB bind P700, the primary electron donor of photosystem I (PSI), as well as the electron acceptors A0, A1 and FX. PSI is a plastocyanin-ferredoxin oxidoreductase, converting photonic excitation into a charge separation, which transfers an electron from the donor P700 chlorophyll pair to the spectroscopically characterized acceptors A0, A1, FX, FA and FB in turn. Oxidized P700 is reduced on the lumenal side of the thylakoid membrane by plastocyanin. The chain is Photosystem I P700 chlorophyll a apoprotein A1 from Oryza nivara (Indian wild rice).